Reading from the N-terminus, the 124-residue chain is Large ribosomal subunit protein bL12 (124 aa).

The protein belongs to the bacterial ribosomal protein bL12 family. Homodimer. Part of the ribosomal stalk of the 50S ribosomal subunit. Forms a multimeric L10(L12)X complex, where L10 forms an elongated spine to which 2 to 4 L12 dimers bind in a sequential fashion. Binds GTP-bound translation factors.

Its function is as follows. Forms part of the ribosomal stalk which helps the ribosome interact with GTP-bound translation factors. Is thus essential for accurate translation. The polypeptide is Large ribosomal subunit protein bL12 (Wolinella succinogenes (strain ATCC 29543 / DSM 1740 / CCUG 13145 / JCM 31913 / LMG 7466 / NCTC 11488 / FDC 602W) (Vibrio succinogenes)).